The chain runs to 37 residues: U10-ctenitoxin-Co1a (37 aa).

4 disulfides stabilise this stretch: Cys-2-Cys-17, Cys-9-Cys-22, Cys-16-Cys-33, and Cys-24-Cys-31.

In terms of tissue distribution, expressed by the venom gland.

The protein resides in the secreted. Functionally, antagonist of L-type calcium channels (Cav1/CACNA1). The sequence is that of U10-ctenitoxin-Co1a from Ctenus ornatus (Brazilian spider).